We begin with the raw amino-acid sequence, 101 residues long: NADH-quinone oxidoreductase subunit K (101 aa).

Helical transmembrane passes span 4-24, 30-50, and 62-82; these read LGHL…GIFL, IVLL…FIAF, and FVFF…AILV.

This sequence belongs to the complex I subunit 4L family. NDH-1 is composed of 14 different subunits. Subunits NuoA, H, J, K, L, M, N constitute the membrane sector of the complex.

It localises to the cell inner membrane. It catalyses the reaction a quinone + NADH + 5 H(+)(in) = a quinol + NAD(+) + 4 H(+)(out). NDH-1 shuttles electrons from NADH, via FMN and iron-sulfur (Fe-S) centers, to quinones in the respiratory chain. The immediate electron acceptor for the enzyme in this species is believed to be ubiquinone. Couples the redox reaction to proton translocation (for every two electrons transferred, four hydrogen ions are translocated across the cytoplasmic membrane), and thus conserves the redox energy in a proton gradient. This is NADH-quinone oxidoreductase subunit K from Xanthomonas axonopodis pv. citri (strain 306).